The sequence spans 135 residues: Small ribosomal subunit protein bS6 (135 aa).

At K93 the chain carries N6-acetyllysine. The segment at 98–135 (EASPMVKAKDERRERRDDFANETADDAEAGDSEEEEEE) is disordered. Residues 104–116 (KAKDERRERRDDF) are compositionally biased toward basic and acidic residues. The segment covering 120–135 (TADDAEAGDSEEEEEE) has biased composition (acidic residues).

Belongs to the bacterial ribosomal protein bS6 family. In terms of assembly, part of the 30S ribosomal subunit. Interacts weakly with uL2 in one of the 3.5 A resolved structures. In terms of processing, 5 different forms of the protein, varying only in the number of C-terminal glutamate residues, were isolated. The sequence shown is form bS6-6, which is the longest. The first two Glu are encoded by the rpsF gene, the other Glu are added post-translationally by the RimK enzyme.

Functionally, binds together with bS18 to 16S ribosomal RNA. This chain is Small ribosomal subunit protein bS6 (rpsF), found in Escherichia coli (strain K12).